We begin with the raw amino-acid sequence, 208 residues long: Imidazole glycerol phosphate synthase subunit HisH (208 aa).

The Glutamine amidotransferase type-1 domain maps to 1–206 (MIVIIDYDTG…KEVTYSCKSS (206 aa)). Cysteine 79 acts as the Nucleophile in catalysis. Catalysis depends on residues histidine 181 and glutamate 183.

In terms of assembly, heterodimer of HisH and HisF.

It localises to the cytoplasm. It carries out the reaction 5-[(5-phospho-1-deoxy-D-ribulos-1-ylimino)methylamino]-1-(5-phospho-beta-D-ribosyl)imidazole-4-carboxamide + L-glutamine = D-erythro-1-(imidazol-4-yl)glycerol 3-phosphate + 5-amino-1-(5-phospho-beta-D-ribosyl)imidazole-4-carboxamide + L-glutamate + H(+). The enzyme catalyses L-glutamine + H2O = L-glutamate + NH4(+). It participates in amino-acid biosynthesis; L-histidine biosynthesis; L-histidine from 5-phospho-alpha-D-ribose 1-diphosphate: step 5/9. Its function is as follows. IGPS catalyzes the conversion of PRFAR and glutamine to IGP, AICAR and glutamate. The HisH subunit catalyzes the hydrolysis of glutamine to glutamate and ammonia as part of the synthesis of IGP and AICAR. The resulting ammonia molecule is channeled to the active site of HisF. The sequence is that of Imidazole glycerol phosphate synthase subunit HisH from Listeria monocytogenes serotype 4a (strain HCC23).